Here is a 351-residue protein sequence, read N- to C-terminus: Putative F-box protein At5g52610 (351 aa).

Residues 1–41 (MISEDLLVEILLRLPVKPLARCLCVCKLWATIIRSRYFINL) form the F-box domain.

This is Putative F-box protein At5g52610 from Arabidopsis thaliana (Mouse-ear cress).